A 441-amino-acid chain; its full sequence is tRNA (guanine(37)-N(1))-methyltransferase (441 aa).

Residues 1 to 9 (MFAPPAARA) constitute a mitochondrion transit peptide. S-adenosyl-L-methionine-binding positions include R221, 248–249 (DL), 276–277 (DG), and N331.

It belongs to the class I-like SAM-binding methyltransferase superfamily. TRM5/TYW2 family. As to quaternary structure, monomer.

It localises to the mitochondrion matrix. The protein resides in the nucleus. It is found in the cytoplasm. It catalyses the reaction guanosine(37) in tRNA + S-adenosyl-L-methionine = N(1)-methylguanosine(37) in tRNA + S-adenosyl-L-homocysteine + H(+). Specifically methylates the N1 position of guanosine-37 in various cytoplasmic and mitochondrial tRNAs. Methylation is not dependent on the nature of the nucleoside 5' of the target nucleoside. This is the first step in the biosynthesis of wybutosine (yW), a modified base adjacent to the anticodon of tRNAs and required for accurate decoding. The polypeptide is tRNA (guanine(37)-N(1))-methyltransferase (Phaeosphaeria nodorum (strain SN15 / ATCC MYA-4574 / FGSC 10173) (Glume blotch fungus)).